A 109-amino-acid polypeptide reads, in one-letter code: Nucleoid-associated protein MADE_1013280 (109 aa).

The interval 86–109 (TSKEKMGDVTGGMPLPPGFKMPGF) is disordered. Residues 99-109 (PLPPGFKMPGF) show a composition bias toward pro residues.

Belongs to the YbaB/EbfC family. As to quaternary structure, homodimer.

The protein localises to the cytoplasm. Its subcellular location is the nucleoid. Functionally, binds to DNA and alters its conformation. May be involved in regulation of gene expression, nucleoid organization and DNA protection. This is Nucleoid-associated protein MADE_1013280 from Alteromonas mediterranea (strain DSM 17117 / CIP 110805 / LMG 28347 / Deep ecotype).